The sequence spans 83 residues: Delta-conotoxin-like Ac6.1 (83 aa).

The N-terminal stretch at 1–22 (MKLTCVVIVAVLFLTAWTFVMA) is a signal peptide. Positions 23-51 (DDSRYGLKDLFPKARHEMKNPEASKLNKR) are excised as a propeptide. Intrachain disulfides connect cysteine 54–cysteine 69, cysteine 61–cysteine 73, and cysteine 68–cysteine 78. 4-hydroxyproline occurs at positions 57 and 65.

Belongs to the conotoxin O1 superfamily. As to expression, expressed by the venom duct.

It localises to the secreted. Its function is as follows. Delta-conotoxins bind to site 6 of voltage-gated sodium channels (Nav) and inhibit the inactivation process. This chain is Delta-conotoxin-like Ac6.1, found in Conus achatinus (Little frog cone).